Reading from the N-terminus, the 124-residue chain is Colorectal cancer-associated protein 1 (124 aa).

The helical transmembrane segment at 77–97 threads the bilayer; it reads LYGCFCVGLVSGMAISVLLLA.

In terms of tissue distribution, expressed in gastrointestinal and immune tissue, as well as prostate, testis and ovary. Expressed in lamina propria and eosinophils but not in epithelial cells. Expression is greater in benign adjacent tissues than in colon tumors.

The protein resides in the membrane. The protein is Colorectal cancer-associated protein 1 (COLCA1) of Homo sapiens (Human).